Reading from the N-terminus, the 343-residue chain is Heat-inducible transcription repressor HrcA (343 aa).

Belongs to the HrcA family.

In terms of biological role, negative regulator of class I heat shock genes (grpE-dnaK-dnaJ and groELS operons). Prevents heat-shock induction of these operons. The chain is Heat-inducible transcription repressor HrcA from Lysinibacillus sphaericus (Bacillus sphaericus).